We begin with the raw amino-acid sequence, 319 residues long: D-alanine--D-alanine ligase B (319 aa).

Residues 117-312 (KQVWQSLGPA…FQQLVLAILA (196 aa)) enclose the ATP-grasp domain. 143–198 (ATELGFPLIVKPAHEGSSIGMAKVNSVDELIAAWKAASTYDSQVLVEQWIQGPEFT) is a binding site for ATP. Mg(2+)-binding residues include Asp-266, Glu-279, and Asn-281.

Belongs to the D-alanine--D-alanine ligase family. Mg(2+) is required as a cofactor. Mn(2+) serves as cofactor.

It is found in the cytoplasm. The catalysed reaction is 2 D-alanine + ATP = D-alanyl-D-alanine + ADP + phosphate + H(+). It participates in cell wall biogenesis; peptidoglycan biosynthesis. Functionally, cell wall formation. The protein is D-alanine--D-alanine ligase B of Pseudomonas syringae pv. tomato (strain ATCC BAA-871 / DC3000).